Here is a 142-residue protein sequence, read N- to C-terminus: Large ribosomal subunit protein bL17 (142 aa).

This sequence belongs to the bacterial ribosomal protein bL17 family. As to quaternary structure, part of the 50S ribosomal subunit. Contacts protein L32.

This chain is Large ribosomal subunit protein bL17, found in Bartonella henselae (strain ATCC 49882 / DSM 28221 / CCUG 30454 / Houston 1) (Rochalimaea henselae).